A 455-amino-acid chain; its full sequence is Ammonium transporter Rh type B (455 aa).

Residues 1 to 10 (MARVPRHRRL) lie on the Cytoplasmic side of the membrane. The chain crosses the membrane as a helical span at residues 11 to 31 (VLPLLCLLFQGATALLFAIFV). Residues 32 to 58 (RYNHETDAALWHWGNHSNVDNEFYFRY) lie on the Extracellular side of the membrane. An N-linked (GlcNAc...) asparagine glycan is attached at Asn-46. A helical membrane pass occupies residues 59-79 (PSFQDVHVMVFVGFGFLMVFL). Residues 80 to 83 (QRYG) lie on the Cytoplasmic side of the membrane. The chain crosses the membrane as a helical span at residues 84–104 (FSSVGFTFLVASLTLQWATLL). Over 105 to 121 (QGFLHSFHGGHIHVGVE) the chain is Extracellular. Residues 122 to 142 (SLINADFCAGAVLISFGAVLG) form a helical membrane-spanning segment. The Cytoplasmic segment spans residues 143–146 (KTGP). Residues 147–167 (AQLLLMALLEAVLFSVNEFIL) traverse the membrane as a helical segment. The Extracellular segment spans residues 168–175 (LSLLGVRD). A helical membrane pass occupies residues 176-198 (AGGSMTIHTFGAYFGLFLSWVLY). Topologically, residues 199–216 (RSQLEKSRHRQSSVYNSD) are cytoplasmic. The helical transmembrane segment at 217 to 237 (LFAMIGTIFLWVFWPSFNSAP) threads the bilayer. Residues 238-248 (TALGDGQHRTV) lie on the Extracellular side of the membrane. Residues 249 to 269 (VNTYYSLTASTLSTFALSALV) traverse the membrane as a helical segment. At 270 to 279 (SGDGRLDMVH) the chain is on the cytoplasmic side. The chain crosses the membrane as a helical span at residues 280 to 300 (VQNAALAGGVVVGTSSEMMLT). Position 301 (Pro-301) is a topological domain, extracellular. Residues 302-322 (FGALAAGFLAGTVSTLGYKFF) traverse the membrane as a helical segment. Residues 323 to 343 (TPILESRFKLQDTCGVHNLHG) are Cytoplasmic-facing. Residues 344-364 (MPGVLGAILGVVVAALATHEA) traverse the membrane as a helical segment. Over 365–390 (YGDGLQSVFPLIAKGQRSATSQAVYQ) the chain is Extracellular. The chain crosses the membrane as a helical span at residues 391–411 (LFGMFVTLVFASVGGSLGGLL). The Cytoplasmic portion of the chain corresponds to 412–455 (LRLPFLDSPPDSQCFEDQVYWEVPGEQETETQRPLRGGESDTRA). Positions 413–421 (RLPFLDSPP) are interaction with ANK3. The disordered stretch occupies residues 434-455 (VPGEQETETQRPLRGGESDTRA). Over residues 441–455 (ETQRPLRGGESDTRA) the composition is skewed to basic and acidic residues.

Belongs to the ammonium transporter (TC 2.A.49) family. Rh subfamily. In terms of assembly, interacts (via C-terminus) with ANK2 and ANK3; required for targeting to the basolateral membrane. Post-translationally, N-glycosylated. In terms of tissue distribution, expressed in kidney by connecting segments and collecting tubules. Also expressed in liver by perivenous hepatocytes. Expressed in the forestomach and the fundus of the stomach. Expressed in duodenum, jejunum, ileum and colon at the level of villous (at protein level). Specifically expressed in kidney where it is restricted to the epithelial linings of the convoluted tubules and the loop of Henle. Also detected in ovary. Expressed by hepatocytes and dermal hair follicles and papillae.

It localises to the cell membrane. It is found in the basolateral cell membrane. It carries out the reaction NH4(+)(in) = NH4(+)(out). The catalysed reaction is methylamine(out) = methylamine(in). The enzyme catalyses CO2(out) = CO2(in). With respect to regulation, inhibited by amiloride. Functionally, ammonium transporter involved in the maintenance of acid-base homeostasis. Transports ammonium and its related derivative methylammonium across the basolateral plasma membrane of epithelial cells likely contributing to renal transepithelial ammonia transport and ammonia metabolism. May transport either NH4(+) or NH3 ammonia species predominantly mediating an electrogenic NH4(+) transport. May act as a CO2 channel providing for renal acid secretion. The chain is Ammonium transporter Rh type B (Rhbg) from Mus musculus (Mouse).